The sequence spans 533 residues: Glucosidase 2 subunit beta (533 aa).

Residues 1–13 (MLLLLLLLPMCWA) form the signal peptide. Phosphoserine is present on S23. LDL-receptor class A domains follow at residues 36–70 (FTCL…AACP) and 71–112 (NGSF…IVCE). Disulfide bonds link C38–C57 and C55–C69. Position 48 (D48) interacts with substrate. 6 residues coordinate Ca(2+): Q49, D52, Y54, D56, D62, and E63. D52 is a substrate binding site. N-linked (GlcNAc...) asparagine glycosylation occurs at N71. Disulfide bonds link C76–C98, C96–C111, and C99–C115. S88 carries the post-translational modification Phosphoserine; by PKC. The Ca(2+) site is built by D93, V95, D97, D103, and E104. K165 is modified (N6-succinyllysine). At S167 the chain carries Phosphoserine. EF-hand domains follow at residues 208 to 243 (RERE…DTDG) and 244 to 279 (DGAL…RDKY). Ca(2+)-binding residues include D221, D223, D225, and E232. Residues 284-363 (LPTEYPPSPP…SPTEEDRMPP (80 aa)) form a disordered region. A compositionally biased stretch (acidic residues) spans 312-336 (TEEEDEDEEDEETEEDEDEEDEDSQ). Phosphoserine; by PKC occurs at positions 388 and 395. One can recognise an MRH domain in the interval 418–519 (SQCYELTTNE…ELMTPAACPE (102 aa)). Cysteines 420 and 433 form a disulfide. Phosphoserine; by PKC is present on S439. 2 disulfides stabilise this stretch: C476–C505 and C490–C517. N481 carries N-linked (GlcNAc...) asparagine glycosylation. Positions 530 to 533 (HDEL) match the Prevents secretion from ER motif.

Heterodimer of a catalytic alpha subunit (GANAB) and a beta subunit (PRKCSH). Binds glycosylated PTPRC. In terms of tissue distribution, ubiquitous. Highly expressed in liver, spleen, lung, duodenum, stomach, adrenal gland, pituitary, testis, corpus luteum, uterus and fetal ovary.

Its subcellular location is the endoplasmic reticulum. It functions in the pathway glycan metabolism; N-glycan metabolism. Regulatory subunit of glucosidase II that cleaves sequentially the 2 innermost alpha-1,3-linked glucose residues from the Glc(2)Man(9)GlcNAc(2) oligosaccharide precursor of immature glycoproteins. Required for efficient PKD1/Polycystin-1 biogenesis and trafficking to the plasma membrane of the primary cilia. In Bos taurus (Bovine), this protein is Glucosidase 2 subunit beta (PRKCSH).